The chain runs to 562 residues: Potassium-transporting ATPase potassium-binding subunit (562 aa).

Helical transmembrane passes span 5-25, 63-83, 132-152, 175-195, 250-270, 279-299, 327-347, 356-376, 379-399, 416-436, 483-503, and 526-546; these read AFLL…PLGS, AAAI…LLMA, GLTV…FALI, LYVL…QGVL, LSNI…CFAF, QGHA…AVVM, FGVL…TGAV, ALGG…FGGV, GLYG…LMIG, MTAL…ALAL, VLLA…VLAI, and LFIG…FIPA.

Belongs to the KdpA family. The system is composed of three essential subunits: KdpA, KdpB and KdpC.

It localises to the cell inner membrane. Part of the high-affinity ATP-driven potassium transport (or Kdp) system, which catalyzes the hydrolysis of ATP coupled with the electrogenic transport of potassium into the cytoplasm. This subunit binds the periplasmic potassium ions and delivers the ions to the membrane domain of KdpB through an intramembrane tunnel. The chain is Potassium-transporting ATPase potassium-binding subunit from Pectobacterium carotovorum subsp. carotovorum (strain PC1).